Here is a 329-residue protein sequence, read N- to C-terminus: Acetyl-coenzyme A carboxylase carboxyl transferase subunit alpha (329 aa).

The 255-residue stretch at 40–294 folds into the CoA carboxyltransferase C-terminal domain; that stretch reads QLETLAARRR…REALERNLSE (255 aa).

Belongs to the AccA family. Acetyl-CoA carboxylase is a heterohexamer composed of biotin carboxyl carrier protein (AccB), biotin carboxylase (AccC) and two subunits each of ACCase subunit alpha (AccA) and ACCase subunit beta (AccD).

The protein localises to the cytoplasm. It carries out the reaction N(6)-carboxybiotinyl-L-lysyl-[protein] + acetyl-CoA = N(6)-biotinyl-L-lysyl-[protein] + malonyl-CoA. The protein operates within lipid metabolism; malonyl-CoA biosynthesis; malonyl-CoA from acetyl-CoA: step 1/1. Functionally, component of the acetyl coenzyme A carboxylase (ACC) complex. First, biotin carboxylase catalyzes the carboxylation of biotin on its carrier protein (BCCP) and then the CO(2) group is transferred by the carboxyltransferase to acetyl-CoA to form malonyl-CoA. The sequence is that of Acetyl-coenzyme A carboxylase carboxyl transferase subunit alpha from Synechococcus sp. (strain CC9311).